The primary structure comprises 63 residues: Large ribosomal subunit protein bL28 (63 aa).

The tract at residues 1 to 20 (MSKRCAITGKGPMVGNNVSH) is disordered.

This sequence belongs to the bacterial ribosomal protein bL28 family.

This is Large ribosomal subunit protein bL28 from Campylobacter fetus subsp. fetus (strain 82-40).